A 226-amino-acid chain; its full sequence is Putative ABC transporter ATP-binding protein DR_2469 (226 aa).

In terms of domain architecture, ABC transporter spans 2–225; it reads IELRHVSHHY…LRVYRERMTW (224 aa). 33–40 lines the ATP pocket; the sequence is GSNGSGKS.

Belongs to the ABC transporter superfamily.

It is found in the cell membrane. In terms of biological role, probably part of an ABC transporter complex. Responsible for energy coupling to the transport system. The chain is Putative ABC transporter ATP-binding protein DR_2469 from Deinococcus radiodurans (strain ATCC 13939 / DSM 20539 / JCM 16871 / CCUG 27074 / LMG 4051 / NBRC 15346 / NCIMB 9279 / VKM B-1422 / R1).